The following is a 101-amino-acid chain: MTVRILAVCGNGQGSSMIMKMKVDQFLTQSNIDHTVNSCAVGEYKSELSGADIIIASTHIAGEISVTGNKYVVGVRNMLSPADFGPKLLEVIKEHFPQDVK.

In terms of domain architecture, PTS EIIB type-2 spans 3–96 (VRILAVCGNG…KLLEVIKEHF (94 aa)). Cys9 functions as the Phosphocysteine intermediate in the catalytic mechanism. The residue at position 9 (Cys9) is a Phosphocysteine.

It localises to the cytoplasm. It catalyses the reaction N(pros)-phospho-L-histidyl-[protein] + L-ascorbate(out) = L-ascorbate 6-phosphate(in) + L-histidyl-[protein]. Its function is as follows. The phosphoenolpyruvate-dependent sugar phosphotransferase system (sugar PTS), a major carbohydrate active transport system, catalyzes the phosphorylation of incoming sugar substrates concomitantly with their translocation across the cell membrane. The enzyme II UlaABC PTS system is involved in ascorbate transport. The protein is Ascorbate-specific PTS system EIIB component (ulaB) of Salmonella choleraesuis (strain SC-B67).